A 570-amino-acid polypeptide reads, in one-letter code: Formate--tetrahydrofolate ligase (570 aa).

65–72 (TPLGEGKT) provides a ligand contact to ATP.

Belongs to the formate--tetrahydrofolate ligase family.

It catalyses the reaction (6S)-5,6,7,8-tetrahydrofolate + formate + ATP = (6R)-10-formyltetrahydrofolate + ADP + phosphate. The protein operates within one-carbon metabolism; tetrahydrofolate interconversion. In Herpetosiphon aurantiacus (strain ATCC 23779 / DSM 785 / 114-95), this protein is Formate--tetrahydrofolate ligase.